The sequence spans 1763 residues: Collagen alpha-2(IV) chain (1763 aa).

An N-terminal signal peptide occupies residues 1–26; that stretch reads MSSRLRIPLWLLLPTTALVYFVTTVS. The interval 27–42 is 7S domain; the sequence is TQITCRDCTNRGCFCV. The interval 43–1529 is triple-helical region; the sequence is GEKGSMGIPG…SGPPGPPGPS (1487 aa). Disordered regions lie at residues 51 to 529 and 550 to 1529; these read PGPQ…PGPK and AGYA…PGPS. Positions 72–81 are enriched in low complexity; that stretch reads PGPKGQKGSQ. Asparagine 126 carries an N-linked (GlcNAc...) asparagine glycan. A compositionally biased stretch (pro residues) spans 135 to 152; that stretch reads PGLPGPPGMPGFPGPPGV. The span at 190 to 199 shows a compositional bias: basic and acidic residues; it reads FPGEKGDRGD. The segment covering 206–217 has biased composition (pro residues); the sequence is RGPPGEAGPPGN. Over residues 225 to 235 the composition is skewed to low complexity; it reads PKGDPGEQGPR. Residue alanine 249 is glycosylated (O-linked (Xyl...) (glycosaminoglycan) serine). Residues 326 to 335 show a composition bias toward low complexity; that stretch reads DGLPGVPGLP. Positions 400–409 are enriched in gly residues; that stretch reads GLPGGPGLPG. 2 stretches are compositionally biased toward low complexity: residues 410-419 and 428-453; these read LPGLEGLPGP and IPGA…PGPR. Basic and acidic residues predominate over residues 466–481; it reads KDGRPGLDGLPGRKGE. Over residues 564–582 the composition is skewed to low complexity; the sequence is LPGIPGATGAPGDDGLPGA. The span at 583–592 shows a compositional bias: pro residues; that stretch reads PGRPGPPGPP. 2 stretches are compositionally biased toward low complexity: residues 699–714 and 731–783; these read DAGL…AVGP and KDGL…PGIP. Positions 810 to 832 are enriched in pro residues; the sequence is PGLPGPKGEPGPSTTGPPGPPGF. Low complexity-rich tracts occupy residues 865–895, 946–977, 1040–1051, 1077–1086, 1108–1146, 1210–1231, 1280–1296, 1367–1386, 1462–1480, and 1499–1510; these read EIGL…KEGP, FPGQ…PGQK, PGLPGQPGLRGP, LMGEKGLPGL, PGLK…QPGL, PGFP…PGPR, LPGL…PGLK, PAGL…PGFP, LPGL…FAGA, and PGLPGFPGIEGI. The span at 1511–1528 shows a compositional bias: pro residues; that stretch reads PGPPGLPGPSGPPGPPGP. The region spanning 1533 to 1756 is the Collagen IV NC1 domain; it reads GFLLVKHSQT…SRCQVCIRSP (224 aa). 6 disulfide bridges follow: cysteine 1548–cysteine 1637, cysteine 1581–cysteine 1634, cysteine 1593–cysteine 1599, cysteine 1656–cysteine 1752, cysteine 1690–cysteine 1749, and cysteine 1702–cysteine 1709.

The protein belongs to the type IV collagen family. In terms of assembly, trimers of two alpha 1(IV) and one alpha 2(IV) chain. Type IV collagen forms a mesh-like network linked through intermolecular interactions between 7S domains and between NC1 domains. In terms of processing, prolines at the third position of the tripeptide repeating unit (G-X-Y) are hydroxylated in some or all of the chains. Type IV collagens contain numerous cysteine residues which are involved in inter- and intramolecular disulfide bonding. 12 of these, located in the NC1 domain, are conserved in all known type IV collagens. Post-translationally, the trimeric structure of the NC1 domains is stabilized by covalent bonds between Lys and Met residues.

The protein resides in the secreted. Its subcellular location is the extracellular space. It is found in the extracellular matrix. It localises to the basement membrane. Functionally, collagen type IV is specific for basement membranes. In Ascaris suum (Pig roundworm), this protein is Collagen alpha-2(IV) chain.